Reading from the N-terminus, the 135-residue chain is Histone H3 type 2 (135 aa).

A disordered region spans residues 1-40 (MARTKQTARKSTGGKAPRKQLATKAARKTPATGGVKKPHR). Lysine 5 bears the N6-methyllysine mark. Lysine 10 carries the post-translational modification N6-acetyllysine; alternate. The residue at position 10 (lysine 10) is an N6-methyllysine; alternate. Serine 11 is modified (phosphoserine). Position 12 is a phosphothreonine (threonine 12). An N6-acetyllysine mark is found at lysine 15, lysine 19, and lysine 24. At lysine 28 the chain carries N6-acetyllysine; alternate. At lysine 28 the chain carries N6-methyllysine; alternate. Residues lysine 36 and lysine 37 each carry the N6-methyllysine modification.

It belongs to the histone H3 family. In terms of assembly, the nucleosome is a histone octamer containing two molecules each of H2A, H2B, H3 and H4 assembled in one H3-H4 heterotetramer and two H2A-H2B heterodimers. The octamer wraps approximately 147 bp of DNA. Acetylation is generally linked to gene activation. Acetylated to form H3K9ac (11%), H3K14ac (17%), H3K18ac (11%), H3K23ac (16%) and H3K27ac (7%). H3K4, H3K35 and H3K36 are not acetylated. H3K4me prevents acetylation. 32% of the histone H3 are acetylated with, on average, 2.4 acetyl-Lys. They are all continuously deacatylated and re-acetylated with a half-life of approximately 2 minutes. In terms of processing, monomethylated to form H3K4me1 (81%), H3K9me1 (16%), H3K27me1 (25%), H3K35me1 (25%) and H3K36me1 (5%). No methylation at H3K14, H3K18 and H3K23. Methylated by a protein complex that includes Mut11. Set1 methylates specifically H3K4. H3K4me1 is associated with silenced euchromatin. Set3 forms H3K9me1, while H3K9me2 is undetected. H3K9me1 is specifically associated with silent, multi-copy transgenes. Post-translationally, no phosphorylation detected.

The protein resides in the nucleus. Its subcellular location is the chromosome. Core component of nucleosome. Nucleosomes wrap and compact DNA into chromatin, limiting DNA accessibility to the cellular machineries which require DNA as a template. Histones thereby play a central role in transcription regulation, DNA repair, DNA replication and chromosomal stability. DNA accessibility is regulated via a complex set of post-translational modifications of histones, also called histone code, and nucleosome remodeling. This chain is Histone H3 type 2 (ch3-II), found in Chlamydomonas reinhardtii (Chlamydomonas smithii).